The chain runs to 90 residues: UPF0729 protein Bm1_03610 (90 aa).

It belongs to the UPF0729 family.

The chain is UPF0729 protein Bm1_03610 from Brugia malayi (Filarial nematode worm).